A 270-amino-acid chain; its full sequence is 3-methyl-2-oxobutanoate hydroxymethyltransferase (270 aa).

Positions 43 and 82 each coordinate Mg(2+). Residues D43–S44, D82, and K112 each bind 3-methyl-2-oxobutanoate. E114 contributes to the Mg(2+) binding site. Residue E179 is the Proton acceptor of the active site.

The protein belongs to the PanB family. In terms of assembly, homodecamer; pentamer of dimers. Mg(2+) is required as a cofactor.

The protein resides in the cytoplasm. It carries out the reaction 3-methyl-2-oxobutanoate + (6R)-5,10-methylene-5,6,7,8-tetrahydrofolate + H2O = 2-dehydropantoate + (6S)-5,6,7,8-tetrahydrofolate. It functions in the pathway cofactor biosynthesis; (R)-pantothenate biosynthesis; (R)-pantoate from 3-methyl-2-oxobutanoate: step 1/2. Its function is as follows. Catalyzes the reversible reaction in which hydroxymethyl group from 5,10-methylenetetrahydrofolate is transferred onto alpha-ketoisovalerate to form ketopantoate. This Staphylococcus carnosus (strain TM300) protein is 3-methyl-2-oxobutanoate hydroxymethyltransferase.